The sequence spans 345 residues: Annexin A9 (345 aa).

Annexin repeat units follow at residues 41–112 (FSAD…ALLQ), 113–184 (PAAH…ALAK), 197–266 (NLAA…NLAS), and 270–341 (NTPL…ALCR).

This sequence belongs to the annexin family. In terms of assembly, homodimer.

In terms of biological role, may act as a low affinity receptor for acetylcholine. The polypeptide is Annexin A9 (ANXA9) (Bos taurus (Bovine)).